Here is a 275-residue protein sequence, read N- to C-terminus: Nitrogenase iron protein 1 (275 aa).

Residue glycine 9–serine 16 participates in ATP binding. Cysteine 97 provides a ligand contact to [4Fe-4S] cluster. An ADP-ribosylarginine; by dinitrogenase reductase ADP-ribosyltransferase modification is found at arginine 100. Cysteine 132 provides a ligand contact to [4Fe-4S] cluster.

This sequence belongs to the NifH/BchL/ChlL family. In terms of assembly, homodimer. [4Fe-4S] cluster is required as a cofactor. Post-translationally, the reversible ADP-ribosylation of Arg-100 inactivates the nitrogenase reductase and regulates nitrogenase activity.

The enzyme catalyses N2 + 8 reduced [2Fe-2S]-[ferredoxin] + 16 ATP + 16 H2O = H2 + 8 oxidized [2Fe-2S]-[ferredoxin] + 2 NH4(+) + 16 ADP + 16 phosphate + 6 H(+). In terms of biological role, the key enzymatic reactions in nitrogen fixation are catalyzed by the nitrogenase complex, which has 2 components: the iron protein and the molybdenum-iron protein. The chain is Nitrogenase iron protein 1 (nifH1) from Methanothermobacter thermautotrophicus (strain ATCC 29096 / DSM 1053 / JCM 10044 / NBRC 100330 / Delta H) (Methanobacterium thermoautotrophicum).